Reading from the N-terminus, the 317-residue chain is Glucose-6-phosphate isomerase, cytosolic 2B (317 aa).

Catalysis depends on glutamate 108, which acts as the Proton donor. Active-site residues include histidine 139 and lysine 264.

Belongs to the GPI family. Homodimer.

The protein localises to the cytoplasm. The catalysed reaction is alpha-D-glucose 6-phosphate = beta-D-fructose 6-phosphate. Its pathway is carbohydrate degradation; glycolysis; D-glyceraldehyde 3-phosphate and glycerone phosphate from D-glucose: step 2/4. The chain is Glucose-6-phosphate isomerase, cytosolic 2B (PGIC2-B) from Clarkia lewisii (Farewell-to-spring).